We begin with the raw amino-acid sequence, 213 residues long: 3-isopropylmalate dehydratase small subunit (213 aa).

Belongs to the LeuD family. LeuD type 1 subfamily. Heterodimer of LeuC and LeuD.

It carries out the reaction (2R,3S)-3-isopropylmalate = (2S)-2-isopropylmalate. It functions in the pathway amino-acid biosynthesis; L-leucine biosynthesis; L-leucine from 3-methyl-2-oxobutanoate: step 2/4. Its function is as follows. Catalyzes the isomerization between 2-isopropylmalate and 3-isopropylmalate, via the formation of 2-isopropylmaleate. The chain is 3-isopropylmalate dehydratase small subunit from Pseudomonas syringae pv. tomato (strain ATCC BAA-871 / DC3000).